Reading from the N-terminus, the 148-residue chain is Probable transcriptional regulator SyrB (148 aa).

Residues 1-58 form a disordered region; sequence MADESNTGPVAAAEAVAETQAPAGKRKSSSRRQRTAAGQVAESKTTAKPKRYSETERA. The segment covering 7–23 has biased composition (low complexity); the sequence is TGPVAAAEAVAETQAPA. A compositionally biased stretch (basic residues) spans 24–34; sequence GKRKSSSRRQR.

This sequence belongs to the SyrB family.

Functionally, responsible for the repression of SyrM activity. The polypeptide is Probable transcriptional regulator SyrB (syrB) (Sinorhizobium fredii (strain NBRC 101917 / NGR234)).